The sequence spans 132 residues: Homeobox protein ceh-1 (132 aa).

The homeobox DNA-binding region spans 1-60; that stretch reads MRRARTAFTYEQLVALENKFKTSRYLSVVERLNLAIQLQLSETQVKIWFQNRRTKWKKHN. Residues 56-80 form a disordered region; it reads WKKHNPGQDANTPQTPPSSDETQIQ. Residues 63 to 80 show a composition bias toward polar residues; sequence QDANTPQTPPSSDETQIQ.

The protein localises to the nucleus. The polypeptide is Homeobox protein ceh-1 (ceh-1) (Caenorhabditis elegans).